A 1523-amino-acid chain; its full sequence is Slit homolog 3 protein (1523 aa).

The signal sequence occupies residues 1–33; sequence MAPGRTGAGAAVRARLALALALASILSGPPAAA. One can recognise an LRRNT domain in the interval 34-61; that stretch reads CPTKCTCSAASVDCHGLGLRAVPRGIPR. LRR repeat units follow at residues 62-83, 86-107, 110-131, 134-155, 158-179, and 182-203; these read NAER…DFTG, NLRV…AFQD, QLER…LFQS, KLTR…AFRG, GVKN…AFRA, and DLEI…SFNH. N-linked (GlcNAc...) asparagine glycosylation occurs at Asn72. The N-linked (GlcNAc...) asparagine glycan is linked to Asn192. One can recognise an LRRCT 1 domain in the interval 215-265; that stretch reads NHLYCDCHLAWLSDWLRQRRTIGQFTLCMAPVHLRGFSVADVQKKEYVCPG. In terms of domain architecture, LRRNT 2 spans 271-307; sequence PACNANSLSCPSACSCSNNIVDCRGKGLTEIPANLPE. Cys284 and Cys293 are disulfide-bonded. 5 LRR repeats span residues 308 to 329, 332 to 353, 356 to 377, 380 to 401, and 404 to 425; these read GIVE…AFIQ, KLKR…AFQG, SLTS…LFDG, SLQL…TFQD, and NLNL…LFAP. The 51-residue stretch at 437 to 487 folds into the LRRCT 2 domain; that stretch reads NPFVCDCHLKWLADYLQDNPIETSGARCSSPRRLANKRISQIKSKKFRCSG. Cystine bridges form between Cys441–Cys464, Cys443–Cys485, Cys505–Cys511, and Cys509–Cys518. The 37-residue stretch at 496–532 folds into the LRRNT 3 domain; the sequence is SSECFMDLVCPEKCRCEGTIVDCSNQKLSRIPSHLPE. LRR repeat units lie at residues 533-554, 558-579, 582-603, 606-627, and 630-651; these read YTTD…GIFK, NLRK…AFDG, GVQE…MFRG, GLKT…TFAG, and SVRL…AFTT. The N-linked (GlcNAc...) asparagine glycan is linked to Asn563. Asn622 carries N-linked (GlcNAc...) asparagine glycosylation. The LRRCT 3 domain occupies 663–713; sequence NPFNCNCHMAWLGRWLRKRRIVSGNPRCQKPFFLKEIPIQDVAIQDFTCEG. 2 cysteine pairs are disulfide-bonded: Cys667/Cys690 and Cys669/Cys711. Positions 716 to 752 constitute an LRRNT 4 domain; that stretch reads ENSCQLSPRCPEQCTCVETVVRCSNRGLHTLPKGMPK. LRR repeat units follow at residues 753-774, 776-797, 800-821, and 824-845; these read DVTE…LSTF, QLTL…TFSN, HLST…AFNG, and SLRV…SFND. Residues Asn784, Asn792, and Asn797 are each glycosylated (N-linked (GlcNAc...) asparagine). Positions 857 to 907 constitute an LRRCT 4 domain; that stretch reads NPLHCDCSLRWLSEWIKAGYKEPGIARCSSPESMADRLLLTTPTHRFQCKG. EGF-like domains lie at 918–953, 955–994, 996–1032, 1034–1072, 1074–1110, and 1119–1155; these read NACL…KDCT, PINT…QRCE, NPDD…ELCD, VIDY…KLCE, DNDD…LFCE, and QTSP…PRCE. Cystine bridges form between Cys920-Cys931, Cys925-Cys941, Cys943-Cys952, Cys959-Cys970, Cys964-Cys982, Cys984-Cys993, Cys1000-Cys1011, Cys1005-Cys1020, Cys1022-Cys1031, Cys1038-Cys1051, Cys1045-Cys1060, Cys1062-Cys1071, Cys1078-Cys1089, Cys1083-Cys1098, Cys1100-Cys1109, Cys1123-Cys1134, Cys1128-Cys1143, and Cys1145-Cys1154. The N-linked (GlcNAc...) asparagine glycan is linked to Asn928. Residue Asn1025 is glycosylated (N-linked (GlcNAc...) asparagine). Residues 1158 to 1332 enclose the Laminin G-like domain; sequence ITVNFVGKDS…PQSLGVSPGC (175 aa). 2 N-linked (GlcNAc...) asparagine glycosylation sites follow: Asn1181 and Asn1247. Disulfide bonds link Cys1305–Cys1332, Cys1355–Cys1364, Cys1372–Cys1382, Cys1377–Cys1391, and Cys1393–Cys1402. 2 consecutive EGF-like domains span residues 1340 to 1365 and 1368 to 1403; these read HGLC…PLCD and AQDP…PLCD. Asn1406 carries N-linked (GlcNAc...) asparagine glycosylation. The region spanning 1408-1444 is the EGF-like 9 domain; it reads SANACSAFKCHHGQCHISDRGEPYCLCQPGFSGNHCE. 7 cysteine pairs are disulfide-bonded: Cys1412–Cys1422, Cys1417–Cys1432, Cys1434–Cys1443, Cys1449–Cys1487, Cys1467–Cys1501, Cys1478–Cys1517, and Cys1482–Cys1519. Residues 1449-1523 enclose the CTCK domain; sequence CLGEIVREAI…HLECGCRECS (75 aa).

It localises to the secreted. In terms of biological role, may act as molecular guidance cue in cellular migration, and function may be mediated by interaction with roundabout homolog receptors. This Rattus norvegicus (Rat) protein is Slit homolog 3 protein (Slit3).